A 104-amino-acid chain; its full sequence is Protein P3 (104 aa).

Residues L77–V99 traverse the membrane as a helical segment.

In terms of assembly, homodimer.

The protein resides in the virion membrane. This is Protein P3 (III) from Pseudoalteromonas phage PM2 (Bacteriophage PM2).